Reading from the N-terminus, the 187-residue chain is Oligoribonuclease (187 aa).

In terms of domain architecture, Exonuclease spans 7–170 (LCWLDMEMTG…DDILESIEEM (164 aa)). Residue Tyr128 is part of the active site.

The protein belongs to the oligoribonuclease family.

The protein localises to the cytoplasm. Functionally, 3'-to-5' exoribonuclease specific for small oligoribonucleotides. This is Oligoribonuclease from Neisseria meningitidis serogroup B (strain ATCC BAA-335 / MC58).